The sequence spans 333 residues: Starch-binding domain-containing protein 1 (333 aa).

The Extracellular segment spans residues 1 to 6; that stretch reads MGAVWS. Residues 7–23 traverse the membrane as a helical segment; it reads ALLVGGGLAGALILWLL. The Cytoplasmic portion of the chain corresponds to 24-333; it reads RGDSGAPGKD…KVVHGWWGIH (310 aa). Disordered stretches follow at residues 31–73 and 106–139; these read GKDG…ELVS and NAREYVPVGKVPDTHSRANSETSRNQSPESRVGE. A compositionally biased stretch (gly residues) spans 50-61; it reads PGGGPGGGGSGG. A Phosphoserine modification is found at Ser67. A compositionally biased stretch (polar residues) spans 124–134; that stretch reads NSETSRNQSPE. A phosphoserine mark is found at Ser135 and Ser162. Positions 181–187 match the LIR motif; that stretch reads HEDWEVV. A phosphoserine mark is found at Ser191, Ser192, Ser201, Ser205, Ser208, Ser216, and Ser219. The region spanning 233–332 is the CBM20 domain; that stretch reads SVKPRQVSIQ…DKVVHGWWGI (100 aa).

As to quaternary structure, interacts with the ATG8 family proteins GABARAP and GABARAPL1. Interacts with several glycogen-associated proteins, such as GYS2 (liver glycogen synthase), GDE (glycogen debranching enzyme), GBE1 (glycogen branching enzyme 1) and EPM2A (Laforin). Ubiquitinated, which leads to proteasomal degradation.

It localises to the preautophagosomal structure membrane. It is found in the endoplasmic reticulum membrane. Its subcellular location is the cell membrane. The protein resides in the sarcolemma. The protein localises to the T-tubule. Functionally, acts as a cargo receptor for glycogen. Delivers its cargo to an autophagic pathway called glycophagy, resulting in the transport of glycogen to lysosomes. This Rattus norvegicus (Rat) protein is Starch-binding domain-containing protein 1.